The following is a 292-amino-acid chain: MEDSMDMDMSPLRPQNYLFGCELKADKDYHFKVDNDENEHQLSLRTVSLGAGAKDELHIVEAEAMNYEGSPIKVTLATLKMSVQPTVSLGGFEITPPVVLRLKCGSGPVHISGQHLVAVEEDAESEDEDEEDVKLLGMSGKRSAPGGGNKVPQKKVKLDEDDEDDDEDDEDDEDDDDDDFDEEETEEKVPVKKSVRDTPAKNAQKSNQNGKDLKPSTPRSKGQESFKKQEKTPKTPKGPSSVEDIKAKMQASIEKGGSLPKVEAKFINYVKNCFRMTDQEAIQDLWQWRKSL.

Met1 carries the post-translational modification N-acetylmethionine. The necessary for interaction with APEX1 stretch occupies residues 1–117 (MEDSMDMDMS…PVHISGQHLV (117 aa)). The tract at residues 1-185 (MEDSMDMDMS…DDDDFDEEET (185 aa)) is required for interaction with SENP3. A Phosphoserine; by PLK1 and PLK2 modification is found at Ser4. Residue Ser10 is modified to Phosphoserine. Lys27 is covalently cross-linked (Glycyl lysine isopeptide (Lys-Gly) (interchain with G-Cter in SUMO2)). Lys32 carries the N6-acetyllysine; alternate modification. Residue Lys32 forms a Glycyl lysine isopeptide (Lys-Gly) (interchain with G-Cter in SUMO1); alternate linkage. Lys32 is covalently cross-linked (Glycyl lysine isopeptide (Lys-Gly) (interchain with G-Cter in SUMO2); alternate). Ser43 is modified (phosphoserine). Tyr67 carries the phosphotyrosine modification. Phosphoserine is present on Ser70. Phosphothreonine is present on residues Thr75 and Thr95. Phosphoserine is present on residues Ser125 and Ser139. The disordered stretch occupies residues 138 to 248 (MSGKRSAPGG…PSSVEDIKAK (111 aa)). A Glycyl lysine isopeptide (Lys-Gly) (interchain with G-Cter in SUMO2) cross-link involves residue Lys141. An N6-acetyllysine; alternate modification is found at Lys150. Residue Lys150 forms a Glycyl lysine isopeptide (Lys-Gly) (interchain with G-Cter in SUMO2); alternate linkage. Positions 152–157 (PQKKVK) match the Nuclear localization signal motif. Lys154 carries the post-translational modification N6-acetyllysine. Residues 159-186 (DEDDEDDDEDDEDDEDDDDDDFDEEETE) are compositionally biased toward acidic residues. Residues 186 to 214 (EEKVPVKKSVRDTPAKNAQKSNQNGKDLK) form an interaction with NOP2 region. A compositionally biased stretch (basic and acidic residues) spans 187–199 (EKVPVKKSVRDTP). Residues 190–196 (PVKKSVR) carry the Nuclear localization signal motif. Thr198 carries the phosphothreonine; by CDK1 and CDK2 modification. Polar residues predominate over residues 201-210 (KNAQKSNQNG). Ser206 is modified (ADP-ribosylserine). Lys211 bears the N6-acetyllysine mark. Residue Lys214 forms a Glycyl lysine isopeptide (Lys-Gly) (interchain with G-Cter in SUMO2) linkage. Thr217 is subject to Phosphothreonine; by CDK1. Residues 221–233 (KGQESFKKQEKTP) show a composition bias toward basic and acidic residues. Ser225 is subject to Phosphoserine. At Lys227 the chain carries N6-acetyllysine. Residue Lys228 is modified to N6-acetyllysine; alternate. Lys228 is covalently cross-linked (Glycyl lysine isopeptide (Lys-Gly) (interchain with G-Cter in SUMO); alternate). Phosphothreonine; by CDK1 occurs at positions 232 and 235. A phosphoserine mark is found at Ser240 and Ser241. Positions 241–292 (SVEDIKAKMQASIEKGGSLPKVEAKFINYVKNCFRMTDQEAIQDLWQWRKSL) are required for nucleolar localization. Residue Lys246 forms a Glycyl lysine isopeptide (Lys-Gly) (interchain with G-Cter in SUMO1); alternate linkage. Glycyl lysine isopeptide (Lys-Gly) (interchain with G-Cter in SUMO2); alternate cross-links involve residues Lys246 and Lys248. N6-acetyllysine; alternate is present on Lys248. Residue Ser252 is modified to Phosphoserine. The residue at position 255 (Lys255) is an N6-acetyllysine; alternate. Lys255 is covalently cross-linked (Glycyl lysine isopeptide (Lys-Gly) (interchain with G-Cter in SUMO1); alternate). Lys255 participates in a covalent cross-link: Glycyl lysine isopeptide (Lys-Gly) (interchain with G-Cter in SUMO2); alternate. Ser258 is modified (phosphoserine). Residues Lys261, Lys265, and Lys271 each participate in a glycyl lysine isopeptide (Lys-Gly) (interchain with G-Cter in SUMO2); alternate cross-link. Residue Lys261 forms a Glycyl lysine isopeptide (Lys-Gly) (interchain with G-Cter in SUMO); alternate linkage. An N6-acetyllysine; alternate mark is found at Lys265 and Lys271. Lys265 is covalently cross-linked (Glycyl lysine isopeptide (Lys-Gly) (interchain with G-Cter in SUMO1); alternate). Lys265 carries the N6-succinyllysine; alternate modification. Thr277 is subject to Phosphothreonine. Lys290 is subject to N6-acetyllysine.

It belongs to the nucleoplasmin family. Decamer formed by two pentameric rings associated in a head-to-head fashion. Disulfide-linked dimers under certain conditions. Interacts with NSUN2 and SENP3. The SWAP complex consists of NPM1, NCL, PARP1 and SWAP70. Interacts with the methylated form of RPS10. Interacts (via N-terminal domain) with APEX1; the interaction is RNA-dependent and decreases peroxide-damaged cells. Interacts with NEK2. Interacts with ROCK2 and BRCA2. Interacts with RPGR. Interacts with CENPW. Interacts with EIF2AK2/PKR. Interacts with DDX31; this interaction prevents interaction between NPM1 and HDM2. Interacts with MYC; competitive with NOP53. Interacts with NOP53; the interaction is direct and competitive with MYC. Interacts with LRRC34. Interacts with RRP1B. Interacts with NPM3. Interacts with ALKBH2. Interacts with TTF1 (via C-terminal region). Interacts with NOP2. Interacts with ARID3C (via REKLES DOMAIN); the interaction mediates ARID3C nuclear shuttling. Acetylated at C-terminal lysine residues, thereby increasing affinity to histones. In terms of processing, ADP-ribosylated. Post-translationally, phosphorylated at Ser-4 by PLK1 and PLK2. Phosphorylation at Ser-4 by PLK2 in S phase is required for centriole duplication and is sufficient to trigger centriole replication. Phosphorylation at Ser-4 by PLK1 takes place during mitosis. Phosphorylated by CDK2 at Ser-125 and Thr-198. Phosphorylation at Thr-198 may trigger initiation of centrosome duplication. Phosphorylated by CDK1 at Thr-198, Thr-217, Thr-232 and Thr-235 during cell mitosis. When these four sites are phosphorated, RNA-binding activity seem to be abolished. May be phosphorylated at Ser-70 by NEK2. The Thr-198 phosphorylated form has higher affinity for ROCK2. Sumoylated by ARF. In terms of processing, ubiquitinated. Ubiquitination leads to proteasomal degradation. Deubiquitinated by USP36. As to expression, expressed in B-cells that have been induced to switch to various Ig isotypes.

It is found in the nucleus. The protein resides in the nucleolus. Its subcellular location is the nucleoplasm. It localises to the cytoplasm. The protein localises to the cytoskeleton. It is found in the microtubule organizing center. The protein resides in the centrosome. Functionally, involved in diverse cellular processes such as ribosome biogenesis, centrosome duplication, protein chaperoning, histone assembly, cell proliferation, and regulation of tumor suppressors p53/TP53 and ARF. Binds ribosome presumably to drive ribosome nuclear export. Associated with nucleolar ribonucleoprotein structures and bind single-stranded nucleic acids. Acts as a chaperonin for the core histones H3, H2B and H4. Stimulates APEX1 endonuclease activity on apurinic/apyrimidinic (AP) double-stranded DNA but inhibits APEX1 endonuclease activity on AP single-stranded RNA. May exert a control of APEX1 endonuclease activity within nucleoli devoted to repair AP on rDNA and the removal of oxidized rRNA molecules. In concert with BRCA2, regulates centrosome duplication. Regulates centriole duplication: phosphorylation by PLK2 is able to trigger centriole replication. Negatively regulates the activation of EIF2AK2/PKR and suppresses apoptosis through inhibition of EIF2AK2/PKR autophosphorylation. Antagonizes the inhibitory effect of ATF5 on cell proliferation and relieves ATF5-induced G2/M blockade. In complex with MYC enhances the transcription of MYC target genes. May act as chaperonin or cotransporter in the nucleolar localization of transcription termination factor TTF1. The polypeptide is Nucleophosmin (Npm1) (Mus musculus (Mouse)).